The following is a 417-amino-acid chain: UPF0761 membrane protein Veis_3782 (417 aa).

The next 6 membrane-spanning stretches (helical) occupy residues 54 to 74 (ILAL…FPIF), 111 to 131 (GLGL…ILTI), 151 to 171 (VLIY…SLAL), 192 to 212 (FLFD…LYHY), 226 to 246 (GGLF…LYLG), and 261 to 281 (LPIL…GAVV).

This sequence belongs to the UPF0761 family.

Its subcellular location is the cell inner membrane. The polypeptide is UPF0761 membrane protein Veis_3782 (Verminephrobacter eiseniae (strain EF01-2)).